We begin with the raw amino-acid sequence, 117 residues long: uncharacterized protein (117 aa).

The chain crosses the membrane as a helical span at residues 1–21 (MEIAIIALFIVSIALIAFSYS). Residues 38-67 (LSAMQEIYKLKKKMTVLEEELLETNLVIRK) are a coiled coil.

The protein resides in the cell membrane. This is an uncharacterized protein from Bacillus subtilis (strain 168).